We begin with the raw amino-acid sequence, 311 residues long: Mycinamicin-resistance protein MyrB (311 aa).

Residues Asn-27, Leu-29, Gly-54, Glu-75, and Asp-98 each coordinate S-adenosyl-L-methionine. Residues Pro-272–Ala-311 are disordered. Positions Pro-293–Pro-302 are enriched in low complexity.

The protein belongs to the class I-like SAM-binding methyltransferase superfamily. rRNA adenine N(6)-methyltransferase family.

Its function is as follows. Confers resistance to macrolide, lincosamide and streptogramin B antibiotics. The protein is Mycinamicin-resistance protein MyrB (myrB) of Micromonospora griseorubida.